A 341-amino-acid chain; its full sequence is Barley B recombinant-like protein A (341 aa).

The span at 48–62 (HQHQQHVPHHHHQPH) shows a compositional bias: basic residues. Disordered stretches follow at residues 48–95 (HQHQ…MNFA) and 150–234 (MQQQ…RKNI). A compositionally biased stretch (low complexity) spans 68–77 (GANGNANGGA). The segment covering 78-90 (MPPPPATEAPPSM) has biased composition (pro residues). Residues 190 to 211 (PKKRQQGRQPKVPRAKKPKKSA) are compositionally biased toward basic residues.

Belongs to the BBR/BPC family.

Its subcellular location is the nucleus. In terms of biological role, transcriptional regulator that specifically binds to GA-rich elements (GAGA-repeats) present in regulatory sequences of genes involved in developmental processes. The sequence is that of Barley B recombinant-like protein A from Oryza sativa subsp. japonica (Rice).